The sequence spans 865 residues: Protein translocase subunit SecA (865 aa).

ATP contacts are provided by residues Q93, G111–T115, and D501. 4 residues coordinate Zn(2+): C841, C843, C852, and C853.

This sequence belongs to the SecA family. In terms of assembly, monomer and homodimer. Part of the essential Sec protein translocation apparatus which comprises SecA, SecYEG and auxiliary proteins SecDF-YajC and YidC. Requires Zn(2+) as cofactor.

It localises to the cell inner membrane. Its subcellular location is the cytoplasm. It carries out the reaction ATP + H2O + cellular proteinSide 1 = ADP + phosphate + cellular proteinSide 2.. Its function is as follows. Part of the Sec protein translocase complex. Interacts with the SecYEG preprotein conducting channel. Has a central role in coupling the hydrolysis of ATP to the transfer of proteins into and across the cell membrane, serving as an ATP-driven molecular motor driving the stepwise translocation of polypeptide chains across the membrane. The protein is Protein translocase subunit SecA of Helicobacter pylori (strain J99 / ATCC 700824) (Campylobacter pylori J99).